Here is a 492-residue protein sequence, read N- to C-terminus: Catalase (492 aa).

Catalysis depends on residues His-65 and Asn-138. Tyr-348 provides a ligand contact to heme.

This sequence belongs to the catalase family. As to quaternary structure, homotetramer. The cofactor is heme. As to expression, in stems, leaves, roots and developing fruits.

It localises to the cytoplasm. Its subcellular location is the cytosol. It is found in the peroxisome matrix. The enzyme catalyses 2 H2O2 = O2 + 2 H2O. Functionally, catalyzes the degradation of hydrogen peroxide (H(2)O(2)) generated by peroxisomal oxidases to water and oxygen, thereby protecting cells from the toxic effects of hydrogen peroxide. This is Catalase (CAT) from Capsicum annuum (Capsicum pepper).